A 428-amino-acid chain; its full sequence is AP-1 complex subunit mu (428 aa).

An N-acetylalanine; partial modification is found at alanine 2. The 258-residue stretch at 169–426 (KNEVFLDVVE…VCLSGDYQFR (258 aa)) folds into the MHD domain.

It belongs to the adaptor complexes medium subunit family. Adaptor protein complex 1 (AP-1) is a heterotetramer composed of two large adaptins (gamma-type subunit and beta-type subunit), a medium adaptin (mu-type subunit) and a small adaptin (sigma-type subunit).

It localises to the golgi apparatus. It is found in the trans-Golgi network. The protein resides in the cytoplasmic vesicle. The protein localises to the clathrin-coated vesicle membrane. Subunit of clathrin-associated adaptor protein complex 1 that plays a role in protein sorting in the trans-Golgi network (TGN) and endosomes. The AP complexes mediate the recruitment of clathrin to membranes and the recognition of sorting signals within the cytosolic tails of transmembrane cargo molecules. Also involved in early steps of phagocytosis and macropinocytosis. This Dictyostelium discoideum (Social amoeba) protein is AP-1 complex subunit mu (apm1).